The primary structure comprises 614 residues: Probable LRR receptor-like serine/threonine-protein kinase At5g45780 (614 aa).

A signal peptide spans Met1–Ala26. Residues Met27–Ser242 lie on the Extracellular side of the membrane. LRR repeat units follow at residues His104–Leu126, Glu128–Thr151, His152–Leu174, and Gly176–Lys197. Residues Asn186, Asn193, and Asn224 are each glycosylated (N-linked (GlcNAc...) asparagine). A helical transmembrane segment spans residues Phe243–Leu263. Over Trp264–Arg614 the chain is Cytoplasmic. Thr297 is subject to Phosphothreonine. The Protein kinase domain maps to Phe300–Val576. Leu306–Val314 lines the ATP pocket. Position 323 is a phosphothreonine (Thr323). Lys328 contacts ATP. Position 380 is a phosphoserine (Ser380). The Proton acceptor role is filled by Asp426. Phosphothreonine is present on residues Thr459, Thr460, and Thr465. Tyr473 carries the phosphotyrosine modification. The residue at position 475 (Ser475) is a Phosphoserine. Thr476 is subject to Phosphothreonine. The residue at position 480 (Ser480) is a Phosphoserine. The residue at position 555 (Thr555) is a Phosphothreonine.

Belongs to the protein kinase superfamily. Ser/Thr protein kinase family.

The protein resides in the membrane. It catalyses the reaction L-seryl-[protein] + ATP = O-phospho-L-seryl-[protein] + ADP + H(+). The enzyme catalyses L-threonyl-[protein] + ATP = O-phospho-L-threonyl-[protein] + ADP + H(+). The protein is Probable LRR receptor-like serine/threonine-protein kinase At5g45780 of Arabidopsis thaliana (Mouse-ear cress).